The primary structure comprises 244 residues: tRNA pseudouridine synthase A (244 aa).

The active-site Nucleophile is the Asp55. Tyr113 lines the substrate pocket.

This sequence belongs to the tRNA pseudouridine synthase TruA family. Homodimer.

It carries out the reaction uridine(38/39/40) in tRNA = pseudouridine(38/39/40) in tRNA. Formation of pseudouridine at positions 38, 39 and 40 in the anticodon stem and loop of transfer RNAs. The protein is tRNA pseudouridine synthase A of Phytoplasma mali (strain AT).